We begin with the raw amino-acid sequence, 212 residues long: Large ribosomal subunit protein uL3 (212 aa).

A disordered region spans residues 133-152 (RGSMGHGSKYHRRPGSLGAK).

The protein belongs to the universal ribosomal protein uL3 family. Part of the 50S ribosomal subunit. Forms a cluster with proteins L14 and L19.

One of the primary rRNA binding proteins, it binds directly near the 3'-end of the 23S rRNA, where it nucleates assembly of the 50S subunit. This chain is Large ribosomal subunit protein uL3, found in Syntrophomonas wolfei subsp. wolfei (strain DSM 2245B / Goettingen).